The chain runs to 345 residues: MRVTDFSFDLPDELIARYPMAQRNASRLLTLDGNTGTLADKQFTDLLGMINPGDLMVFNNTRVIPARLFGQKASGGKLEILVERMLDDKRILAHVRSSKSPKVDSIIHLDGGYEMKMAARHDALFELELLSDLTILEVLEAVGHMPLPPYIDRPDEDADKERYQTVYNQNPGAVAAPTAGLHFDDAMLDALKAKGVNIAFVTLHVGAGTFQPVRVDNVLEHKMHSEWANVPQDVVDLIAQTKAAGKRVVAVGTTSVRSLESAARASEGELKAFSGDTDIFIYPGYQFQIVDAMITNFHLPESTLIMLVSAFAGFDHVMAAYQHAITQKYRFFSYGDAMFVTKKAH.

Belongs to the QueA family. As to quaternary structure, monomer.

It localises to the cytoplasm. It carries out the reaction 7-aminomethyl-7-carbaguanosine(34) in tRNA + S-adenosyl-L-methionine = epoxyqueuosine(34) in tRNA + adenine + L-methionine + 2 H(+). It participates in tRNA modification; tRNA-queuosine biosynthesis. Transfers and isomerizes the ribose moiety from AdoMet to the 7-aminomethyl group of 7-deazaguanine (preQ1-tRNA) to give epoxyqueuosine (oQ-tRNA). This chain is S-adenosylmethionine:tRNA ribosyltransferase-isomerase, found in Shewanella sp. (strain MR-4).